A 185-amino-acid chain; its full sequence is Putative manganese efflux pump MntP (185 aa).

6 helical membrane-spanning segments follow: residues 4–24 (LTSS…ALAI), 36–56 (ALVI…AGWI), 65–85 (ISSY…IKMI), 105–125 (VILL…SFGV), 130–150 (VLMP…AGVF), and 165–185 (IFGG…ILPL).

It belongs to the MntP (TC 9.B.29) family.

Its subcellular location is the cell membrane. Probably functions as a manganese efflux pump. The chain is Putative manganese efflux pump MntP from Methanoregula boonei (strain DSM 21154 / JCM 14090 / 6A8).